Reading from the N-terminus, the 672-residue chain is Acetoacetyl-CoA synthetase (672 aa).

Belongs to the ATP-dependent AMP-binding enzyme family.

It is found in the cytoplasm. The protein localises to the cytosol. The enzyme catalyses acetoacetate + ATP + CoA = acetoacetyl-CoA + AMP + diphosphate. Its function is as follows. Converts acetoacetate to acetoacetyl-CoA in the cytosol. Ketone body-utilizing enzyme, responsible for the synthesis of cholesterol and fatty acids. The protein is Acetoacetyl-CoA synthetase (AACS) of Macaca fascicularis (Crab-eating macaque).